We begin with the raw amino-acid sequence, 129 residues long: Small ribosomal subunit protein uS11 (129 aa).

This sequence belongs to the universal ribosomal protein uS11 family. In terms of assembly, part of the 30S ribosomal subunit. Interacts with proteins S7 and S18. Binds to IF-3.

Located on the platform of the 30S subunit, it bridges several disparate RNA helices of the 16S rRNA. Forms part of the Shine-Dalgarno cleft in the 70S ribosome. The protein is Small ribosomal subunit protein uS11 of Sphingopyxis alaskensis (strain DSM 13593 / LMG 18877 / RB2256) (Sphingomonas alaskensis).